The sequence spans 385 residues: Carbamoyl phosphate synthase small chain (385 aa).

Residues M1–F196 are CPSase. The L-glutamine site is built by S51, G245, and G247. The Glutamine amidotransferase type-1 domain maps to H197–S384. The active-site Nucleophile is C273. Positions 274, 277, 315, and 318 each coordinate L-glutamine. Active-site residues include H357 and E359.

Belongs to the CarA family. Composed of two chains; the small (or glutamine) chain promotes the hydrolysis of glutamine to ammonia, which is used by the large (or ammonia) chain to synthesize carbamoyl phosphate. Tetramer of heterodimers (alpha,beta)4.

It carries out the reaction hydrogencarbonate + L-glutamine + 2 ATP + H2O = carbamoyl phosphate + L-glutamate + 2 ADP + phosphate + 2 H(+). It catalyses the reaction L-glutamine + H2O = L-glutamate + NH4(+). Its pathway is amino-acid biosynthesis; L-arginine biosynthesis; carbamoyl phosphate from bicarbonate: step 1/1. It functions in the pathway pyrimidine metabolism; UMP biosynthesis via de novo pathway; (S)-dihydroorotate from bicarbonate: step 1/3. In terms of biological role, small subunit of the glutamine-dependent carbamoyl phosphate synthetase (CPSase). CPSase catalyzes the formation of carbamoyl phosphate from the ammonia moiety of glutamine, carbonate, and phosphate donated by ATP, constituting the first step of 2 biosynthetic pathways, one leading to arginine and/or urea and the other to pyrimidine nucleotides. The small subunit (glutamine amidotransferase) binds and cleaves glutamine to supply the large subunit with the substrate ammonia. The protein is Carbamoyl phosphate synthase small chain of Buchnera aphidicola subsp. Schizaphis graminum (strain Sg).